Reading from the N-terminus, the 278-residue chain is Extracellular metalloprotease MCYG_03238 (278 aa).

Residues 1–19 form the signal peptide; it reads MRFSIVLSSIAALSSVAAA. The N-linked (GlcNAc...) asparagine glycan is linked to Asn52. His170 contacts Zn(2+). Glu171 is a catalytic residue. Position 174 (His174) interacts with Zn(2+). A disulfide bond links Cys209 and Cys255.

It belongs to the peptidase M43B family.

The protein localises to the secreted. In terms of biological role, secreted metalloproteinase that allows assimilation of proteinaceous substrates. Plays a pivotal role as a pathogenicity determinant during infections and contributes to the ability of the pathogen to persist within the mammalian host. This Arthroderma otae (strain ATCC MYA-4605 / CBS 113480) (Microsporum canis) protein is Extracellular metalloprotease MCYG_03238.